Consider the following 258-residue polypeptide: UPF0246 protein YPK_3600 (258 aa).

It belongs to the UPF0246 family.

This is UPF0246 protein YPK_3600 from Yersinia pseudotuberculosis serotype O:3 (strain YPIII).